We begin with the raw amino-acid sequence, 452 residues long: Translation initiation factor eIF2B subunit gamma (452 aa).

M1 carries the post-translational modification N-acetylmethionine. S261 bears the Phosphoserine mark.

It belongs to the eIF-2B gamma/epsilon subunits family. As to quaternary structure, component of the translation initiation factor 2B (eIF2B) complex which is a heterodecamer of two sets of five different subunits: alpha, beta, gamma, delta and epsilon. Subunits alpha, beta and delta comprise a regulatory subcomplex and subunits epsilon and gamma comprise a catalytic subcomplex. Within the complex, the hexameric regulatory complex resides at the center, with the two heterodimeric catalytic subcomplexes bound on opposite sides.

It localises to the cytoplasm. It is found in the cytosol. With respect to regulation, activated by the chemical integrated stress response (ISR) inhibitor ISRIB which stimulates guanine nucleotide exchange factor activity for both phosphorylated and unphosphorylated eIF2. Functionally, acts as a component of the translation initiation factor 2B (eIF2B) complex, which catalyzes the exchange of GDP for GTP on the eukaryotic initiation factor 2 (eIF2) complex gamma subunit. Its guanine nucleotide exchange factor activity is repressed when bound to eIF2 complex phosphorylated on the alpha subunit, thereby limiting the amount of methionyl-initiator methionine tRNA available to the ribosome and consequently global translation is repressed. The sequence is that of Translation initiation factor eIF2B subunit gamma (EIF2B3) from Bos taurus (Bovine).